A 384-amino-acid polypeptide reads, in one-letter code: Nodal homolog 2-B (384 aa).

Positions 1–18 (MASLGAILLFAIASLMHG) are cleaved as a signal peptide. A propeptide spanning residues 19-283 (RPIHSDRKGA…RVADARRHRR (265 aa)) is cleaved from the precursor. Asn-71, Asn-173, and Asn-344 each carry an N-linked (GlcNAc...) asparagine glycan. Cys-306 and Cys-372 form a disulfide bridge.

The protein belongs to the TGF-beta family. Homodimer; disulfide-linked. Forms heterodimers with the TGF-beta family member derriere. Interacts with tsku; enhances nodal2 activity.

The protein resides in the secreted. Cooperation and regulatory loops of multiple nodals are essential for mesendoderm patterning in early embryos. Essential for mesoderm formation and axial patterning during embryonic development. Activates the activin-like signaling pathway to induce dorsal and ventral mesoderm in animal cap ectoderm. In addition, also dorsalizes ventral marginal zone (VMZ) tissues during gastrulation. Induces muscle actin. Appears to act as both a short-range and long-range morphogen. The unprocessed protein inhibits bmp- and wnt-signaling. The polypeptide is Nodal homolog 2-B (nodal2-b) (Xenopus laevis (African clawed frog)).